A 790-amino-acid chain; its full sequence is AMP deaminase (790 aa).

Residues Met1–Phe14 are compositionally biased toward polar residues. Residues Met1–Asp26 are disordered. Zn(2+) is bound by residues His221 and His223. Substrate is bound by residues His223 and Lys292 to Tyr297. A Zn(2+)-binding site is contributed by His488. Residue Glu491 coordinates substrate. Catalysis depends on His510, which acts as the Proton acceptor. Asp565 provides a ligand contact to Zn(2+). Asp566 to Gln569 contacts substrate. Disordered regions lie at residues Asn698–Gly726 and Pro739–Lys790. 2 stretches are compositionally biased toward low complexity: residues Gly706–Gly726 and Asn750–Asn781.

The protein belongs to the metallo-dependent hydrolases superfamily. Adenosine and AMP deaminases family. In terms of assembly, homodimer. Zn(2+) serves as cofactor.

It localises to the cytoplasm. It carries out the reaction AMP + H2O + H(+) = IMP + NH4(+). It functions in the pathway purine metabolism; IMP biosynthesis via salvage pathway; IMP from AMP: step 1/1. Activated by ATP, inhibited by GTP, EDTA and inorganic phosphate. Catalyzes the conversion of adenosine monophosphate (AMP) to inosine monophosphate (IMP) and ammonia (NH4(+)). Participates in the regulation of the adenylated nucleotide pool and the interconversion to guanylated nucleotides during early morphodifferentiation. In Dictyostelium discoideum (Social amoeba), this protein is AMP deaminase (amdA).